A 236-amino-acid chain; its full sequence is Reticulon-3 (236 aa).

The span at 1 to 24 (MAEPSAATQSPSISSSSSGAEPSA) shows a compositional bias: low complexity. Residues 1 to 31 (MAEPSAATQSPSISSSSSGAEPSAPGGGGSP) are disordered. N-acetylalanine is present on A2. Over 2-67 (AEPSAATQSP…KKTGFVFGTT (66 aa)) the chain is Cytoplasmic. Position 30 is a phosphoserine (S30). The 189-residue stretch at 48–236 (VHDLIFWRDV…LPGIAKKKAE (189 aa)) folds into the Reticulon domain. Positions 68-91 (LIMLLSLAAFSVISVVSYLILALL) form an intramembrane region, helical. Residues 92 to 151 (SVTISFRIYKSVIQAVQKSEEGHPFKAYLDVDITLSSEAFHNYMNAAMVHINRALKLIIR) are Cytoplasmic-facing. The segment at residues 152-172 (LFLVEDLVDSLKLAVFMWLMT) is an intramembrane region (helical). Residues 173–176 (YVGA) lie on the Cytoplasmic side of the membrane. The segment at residues 177 to 197 (VFNGITLLILAELLIFSVPIV) is an intramembrane region (helical). The interaction with FADD stretch occupies residues 191–236 (IFSVPIVYEKYKTQIDHYVGIARDQTKSIVEKIQAKLPGIAKKKAE). The Cytoplasmic segment spans residues 198–236 (YEKYKTQIDHYVGIARDQTKSIVEKIQAKLPGIAKKKAE). The tract at residues 204 to 206 (QID) is interaction with BACE1.

As to quaternary structure, homodimer. Interacts with RTN4. Interacts with BACE1, BACE2, BCL2 and FADD. Interacts with ATL1 and ATL2. Interacts with TMEM33. Interacts with ZFYVE27 and with KIF5A in a ZFYVE27-dependent manner. Interacts with RIGI. Interacts with TRIM25.

The protein localises to the endoplasmic reticulum membrane. The protein resides in the golgi apparatus membrane. Its function is as follows. May be involved in membrane trafficking in the early secretory pathway. Inhibits BACE1 activity and amyloid precursor protein processing. May induce caspase-8 cascade and apoptosis. May favor BCL2 translocation to the mitochondria upon endoplasmic reticulum stress. Induces the formation of endoplasmic reticulum tubules. Acts also as an inflammation-resolving regulator by interacting with both TRIM25 and RIGI, subsequently impairing RIGI 'Lys-63'-linked polyubiquitination leading to IRF3 and NF-kappa-B inhibition. The sequence is that of Reticulon-3 (RTN3) from Pongo abelii (Sumatran orangutan).